Consider the following 146-residue polypeptide: Hemoglobin subunit beta (146 aa).

Residues His2 to His146 enclose the Globin domain. Heme b-binding residues include His63 and His92.

The protein belongs to the globin family. Heterotetramer of two alpha chains and two beta chains. Red blood cells.

In terms of biological role, involved in oxygen transport from the lung to the various peripheral tissues. In Anser indicus (Bar-headed goose), this protein is Hemoglobin subunit beta (HBB).